The chain runs to 816 residues: Lon protease (816 aa).

Residues 27–221 (LPLLPIRDVV…KVNDLLAREH (195 aa)) form the Lon N-terminal domain. 372-379 (GPPGVGKT) is an ATP binding site. Residues 608 to 789 (KNEVGVVNGL…DEVLKLALEK (182 aa)) form the Lon proteolytic domain. Residues S695 and K738 contribute to the active site. Residues 795-816 (PKGKAKPATPKVVVRPSKEISA) form a disordered region. A compositionally biased stretch (low complexity) spans 800–809 (KPATPKVVVR).

The protein belongs to the peptidase S16 family. In terms of assembly, homohexamer. Organized in a ring with a central cavity.

It is found in the cytoplasm. The enzyme catalyses Hydrolysis of proteins in presence of ATP.. Functionally, ATP-dependent serine protease that mediates the selective degradation of mutant and abnormal proteins as well as certain short-lived regulatory proteins. Required for cellular homeostasis and for survival from DNA damage and developmental changes induced by stress. Degrades polypeptides processively to yield small peptide fragments that are 5 to 10 amino acids long. Binds to DNA in a double-stranded, site-specific manner. This chain is Lon protease, found in Trichlorobacter lovleyi (strain ATCC BAA-1151 / DSM 17278 / SZ) (Geobacter lovleyi).